Here is a 496-residue protein sequence, read N- to C-terminus: Neuronal acetylcholine receptor subunit beta-4 (496 aa).

A signal peptide spans 1 to 19 (MRSALPLVLFSLVALCGRG). Over 20–236 (DCRVANAEEK…IIKRKPLFYT (217 aa)) the chain is Extracellular. Residues asparagine 36, asparagine 93, asparagine 138, and asparagine 166 are each glycosylated (N-linked (GlcNAc...) asparagine). A disulfide bridge connects residues cysteine 153 and cysteine 167. The helical transmembrane segment at 237–257 (INLIIPCVLITSLAILVFYLP) threads the bilayer. At 258–265 (SDCGEKMT) the chain is on the cytoplasmic side. Glutamate 262 serves as a coordination point for Na(+). Residues 266-286 (LCISVLLALTVFLLLISKIVP) form a helical membrane-spanning segment. Over 287 to 298 (PTSLNVPLIGKY) the chain is Extracellular. A helical transmembrane segment spans residues 299–319 (LMFTMVLVTFSIVTSVCVLNV). Over 320–464 (HHRSPSTHTM…WKYVAMVVDR (145 aa)) the chain is Cytoplasmic. Residues 465–485 (LFLWVFVVVCVLGTVGLFLPP) form a helical membrane-spanning segment. The Extracellular portion of the chain corresponds to 486 to 496 (LFQTHTPSEEP).

This sequence belongs to the ligand-gated ion channel (TC 1.A.9) family. Acetylcholine receptor (TC 1.A.9.1) subfamily. Beta-4/CHRNB4 sub-subfamily. In terms of assembly, neuronal AChR is composed of two different types of subunits: alpha and beta. CHRNB4/Beta-4 subunit can be combined to CHRNA2/alpha-2, CHRNA3/alpha-3 or CHRNA4/alpha-4, CHRNA5/alpha-5 and CHRNB3/beta-3 to give rise to functional receptors. Forms stoichiometries such as (CHRNA3)2:(CHRNB4)3 or (CHRNA3:CHRNB4)2:CHRNB3. Interacts with RIC3; which is required for proper folding and assembly. Interacts with LYPD6.

Its subcellular location is the synaptic cell membrane. The protein resides in the cell membrane. It catalyses the reaction Ca(2+)(in) = Ca(2+)(out). It carries out the reaction K(+)(in) = K(+)(out). The enzyme catalyses Na(+)(in) = Na(+)(out). Component of neuronal acetylcholine receptors (nAChRs) that function as pentameric, ligand-gated cation channels with high calcium permeability among other activities. nAChRs are excitatory neurotrasnmitter receptors formed by a collection of nAChR subunits known to mediate synaptic transmission in the nervous system and the neuromuscular junction. Each nAchR subunit confers differential attributes to channel properties, including activation, deactivation and desensitization kinetics, pH sensitivity, cation permeability, and binding to allosteric modulators. CHRNB4 forms heteropentameric neuronal acetylcholine receptors with CHRNA2, CHRNA3 and CHRNA4, as well as CHRNA5 and CHRNB3 as accesory subunits. CHRNA3:CHRNB4 being predominant in neurons of the autonomic ganglia, it is known as ganglionic nicotinic receptor. CHRNA3:CHRNB4 or CHRNA3:CHRNA5:CHRNB4 play also an important role in the habenulo-interpeduncular tract, modulating the mesolimbic dopamine system and affecting reward circuits and addiction. Hypothalamic CHRNA3:CHRNB4 nAChR activation by nicotine leads to activation of POMC neurons and a decrease in food intake. The polypeptide is Neuronal acetylcholine receptor subunit beta-4 (CHRNB4) (Bos taurus (Bovine)).